Here is a 184-residue protein sequence, read N- to C-terminus: MIHHDSSKMYGTTILSIRRDKNVVVIGDGQVSLGHTVIKSGARKVRRLSGDSVIAGFAGATADAFTLFERLESKLDKHPGQLMRACVELAKDWRMDKYLRKLEAMMIVADKSISLVITGTGDVLEPEDGIAAIGSGGNFALSAAKALIDVEGISIEEIAKKAMKIAADICVYTNHNLIIEKIEE.

Residue threonine 12 is part of the active site. 3 residues coordinate Na(+): alanine 167, cysteine 170, and threonine 173.

The protein belongs to the peptidase T1B family. HslV subfamily. A double ring-shaped homohexamer of HslV is capped on each side by a ring-shaped HslU homohexamer. The assembly of the HslU/HslV complex is dependent on binding of ATP.

Its subcellular location is the cytoplasm. It carries out the reaction ATP-dependent cleavage of peptide bonds with broad specificity.. Its activity is regulated as follows. Allosterically activated by HslU binding. Its function is as follows. Protease subunit of a proteasome-like degradation complex believed to be a general protein degrading machinery. This is ATP-dependent protease subunit HslV from Wolbachia pipientis subsp. Culex pipiens (strain wPip).